A 76-amino-acid chain; its full sequence is Protein OPG128 (76 aa).

Residues cysteine 17 and cysteine 21 are joined by a disulfide bond.

The protein belongs to the orthopoxvirus OPG128 family. In terms of assembly, interacts with sulfhydryl oxidase OPG072; this interaction involves formation of a transient disulfide-bonded intermediate, allowing disulfide bond transfer. Interacts with OPG088; this interaction involves formation of a transient disulfide-bonded intermediate, allowing disulfide bond transfer.

Late protein which probably participates in disulfide bond formation by functioning as a thiol-disulfide transfer protein between membrane-associated OPG072 and OPG08. The complete pathway for formation of disulfide bonds in intracellular virion membrane proteins sequentially involves oxidation of OPG072, OPG128 and OPG08. The protein is Protein OPG128 (OPG128) of Homo sapiens (Human).